A 144-amino-acid chain; its full sequence is Large ribosomal subunit protein uL15 (144 aa).

The tract at residues 1–53 (MRLNTLSPAEGAKHAPKRVGRGIGSGLGKTGGRGHKGQKSRSGGGVRRGFEGG) is disordered. Over residues 21–31 (RGIGSGLGKTG) the composition is skewed to gly residues.

Belongs to the universal ribosomal protein uL15 family. Part of the 50S ribosomal subunit.

In terms of biological role, binds to the 23S rRNA. The sequence is that of Large ribosomal subunit protein uL15 from Proteus mirabilis (strain HI4320).